The sequence spans 228 residues: Chromatin remodeling protein SHL (228 aa).

A BAH domain is found at 21–137 (KSIQEGDAVL…STTGAFDPDR (117 aa)). The PHD-type zinc finger occupies 139-190 (TVFCKCEMPYNPDDLMVQCEECSEWFHPSCIGTTIEEAKKPDNFYCEECSPQ). Residues 191–203 (QQNLHNSNSTSNN) show a composition bias toward polar residues. The interval 191–228 (QQNLHNSNSTSNNRDAKVNGKRSLEVTKSKNKHTKRPG) is disordered. Basic and acidic residues predominate over residues 204–218 (RDAKVNGKRSLEVTK). Positions 210–217 (GKRSLEVT) match the Nuclear localization signal motif. Residues 219–228 (SKNKHTKRPG) show a composition bias toward basic residues.

Belongs to the SHL1/EBS protein family. In terms of assembly, recognizes di- and trimethylated histone H3 at lysine 4. Interacts with HDA6. Interacts with DEK3. Expressed ubiquitously. Mostly expressed in roots, stems, leaves and flowers, and, to a lower extent, in siliques.

It is found in the nucleus. Its function is as follows. Chromatin remodeling factor that binds to methylated histone (e.g. H3K4me2/3) to prevent their acetylation (e.g. H3K9K14Ac), likely by recruiting histone deacetylase (HDAC) complexes, and thus regulate the transcription of target genes. Required during development and for fertility, probably by modulating developmental gene expression. Promotes development speed, but at fitness cost. Involved in the chromatin-mediated repression of floral initiation and controls genes regulating flowering. Negatively regulates the expression of the floral integrator SOC1, by preventing high levels of H3 acetylation, thus maintaining an inactive chromatin conformation. The chain is Chromatin remodeling protein SHL from Arabidopsis thaliana (Mouse-ear cress).